A 173-amino-acid chain; its full sequence is Photosystem I assembly protein Ycf3 (173 aa).

3 TPR repeats span residues 35-68 (AYIY…EENK), 72-105 (GETL…NPKQ), and 120-153 (GRNA…YPGG).

It belongs to the Ycf3 family.

It is found in the cellular thylakoid membrane. In terms of biological role, essential for the assembly of the photosystem I (PSI) complex. May act as a chaperone-like factor to guide the assembly of the PSI subunits. The polypeptide is Photosystem I assembly protein Ycf3 (Prochlorococcus marinus (strain MIT 9312)).